A 108-amino-acid chain; its full sequence is T-cell acute lymphocytic leukemia protein 2 (108 aa).

The 53-residue stretch at 2–54 (TRKIFTNTRERWRQQNVNSAFAKLRKLIPTHPPDKKLSKNETLRLAMRYINFL) folds into the bHLH domain. Positions 89-108 (DRTLLENYQVPSPGPSHHIP) are disordered.

The sequence is that of T-cell acute lymphocytic leukemia protein 2 (TAL2) from Homo sapiens (Human).